The sequence spans 87 residues: Small ribosomal subunit protein uS17 (87 aa).

Belongs to the universal ribosomal protein uS17 family. As to quaternary structure, part of the 30S ribosomal subunit.

Functionally, one of the primary rRNA binding proteins, it binds specifically to the 5'-end of 16S ribosomal RNA. The sequence is that of Small ribosomal subunit protein uS17 from Bacillus mycoides (strain KBAB4) (Bacillus weihenstephanensis).